The sequence spans 418 residues: Gamma-glutamyl phosphate reductase (418 aa).

Belongs to the gamma-glutamyl phosphate reductase family.

Its subcellular location is the cytoplasm. The enzyme catalyses L-glutamate 5-semialdehyde + phosphate + NADP(+) = L-glutamyl 5-phosphate + NADPH + H(+). Its pathway is amino-acid biosynthesis; L-proline biosynthesis; L-glutamate 5-semialdehyde from L-glutamate: step 2/2. Catalyzes the NADPH-dependent reduction of L-glutamate 5-phosphate into L-glutamate 5-semialdehyde and phosphate. The product spontaneously undergoes cyclization to form 1-pyrroline-5-carboxylate. In Chlorobium limicola (strain DSM 245 / NBRC 103803 / 6330), this protein is Gamma-glutamyl phosphate reductase.